A 325-amino-acid chain; its full sequence is Tagatose 1,6-diphosphate aldolase (325 aa).

This sequence belongs to the aldolase LacD family.

The catalysed reaction is D-tagatofuranose 1,6-bisphosphate = D-glyceraldehyde 3-phosphate + dihydroxyacetone phosphate. It functions in the pathway carbohydrate metabolism; D-tagatose 6-phosphate degradation; D-glyceraldehyde 3-phosphate and glycerone phosphate from D-tagatose 6-phosphate: step 2/2. The protein is Tagatose 1,6-diphosphate aldolase of Staphylococcus epidermidis (strain ATCC 12228 / FDA PCI 1200).